The primary structure comprises 1367 residues: MKSGSGGGSPTSLWGLLFLSAALSLWPTSGEICGPGIDIRNDYQQLKRLENCTVIEGYLHILLISKAEDYRSYRFPKLTVITEYLLLFRVAGLESLGDLFPNLTVIRGWKLFYNYALVIFEMTNLKDIGLYNLRNITRGAIRIEKNADLCYLSTVDWSLILDAVSNNYIVGNKPPKECGDLCPGTMEEKPMCEKTTINNEYNYRCWTTNRCQKMCPSTCGKRACTENNECCHPECLGSCSAPDNDTACVACRHYYYAGVCVPACPPNTYRFEGWRCVDRDFCANILSAESSDSEGFVIHDGECMQECPSGFIRNGSQSMYCIPCEGPCPKVCEEEKKTKTIDSVTSAQMLQGCTIFKGNLLINIRRGNNIASELENFMGLIEVVTGYVKIRHSHALVSLSFLKNLRLILGEEQLEGNYSFYVLDNQNLQQLWDWDHRNLTIKAGKMYFAFNPKLCVSEIYRMEEVTGTKGRQSKGDINTRNNGERASCESDVLHFTSTTTSKNRIIITWHRYRPPDYRDLISFTVYYKEAPFKNVTEYDGQDACGSNSWNMVDVDLPPNKDVEPGILLHGLKPWTQYAVYVKAVTLTMVENDHIRGAKSEILYIRTNASVPSIPLDVLSASNSSSQLIVKWNPPSLPNGNLSYYIVRWQRQPQDGYLYRHNYCSKDKIPIRKYADGTIDIEEVTENPKTEVCGGEKGPCCACPKTEAEKQAEKEEAEYRKVFENFLHNSIFVPRPERKRRDVMQVANTTMSSRSRNTTAADTYNITDPEELETEYPFFESRVDNKERTVISNLRPFTLYRIDIHSCNHEAEKLGCSASNFVFARTMPAEGADDIPGPVTWEPRPENSIFLKWPEPENPNGLILMYEIKYGSQVEDQRECVSRQEYRKYGGAKLNRLNPGNYTARIQATSLSGNGSWTDPVFFYVQAKTGYENFIHLIIALPVAVLLIVGGLVIMLYVFHRKRNNSRLGNGVLYASVNPEYFSAADVYVPDEWEVAREKITMSRELGQGSFGMVYEGVAKGVVKDEPETRVAIKTVNEAASMRERIEFLNEASVMKEFNCHHVVRLLGVVSQGQPTLVIMELMTRGDLKSYLRSLRPEMENNPVLAPPSLSKMIQMAGEIADGMAYLNANKFVHRDLAARNCMVAEDFTVKIGDFGMTRDIYETDYYRKGGKGLLPVRWMSPESLKDGVFTTYSDVWSFGVVLWEIATLAEQPYQGLSNEQVLRFVMEGGLLDKPDNCPDMLFELMRMCWQYNPKMRPSFLEIISSIKEEMEPGFREVSFYYSEENKLPEPEELDLEPENMESVPLDPSASSSSLPLPDRHSGHKAENGPGPGVLVLRASFDERQPYAHMNGGRKNERALPLPQSSTC.

Residues 1–30 form the signal peptide; it reads MKSGSGGGSPTSLWGLLFLSAALSLWPTSG. A disulfide bridge connects residues cysteine 33 and cysteine 52. N-linked (GlcNAc...) asparagine glycans are attached at residues asparagine 51, asparagine 102, and asparagine 135. Intrachain disulfides connect cysteine 150/cysteine 178, cysteine 182/cysteine 205, cysteine 192/cysteine 211, cysteine 215/cysteine 224, cysteine 219/cysteine 230, cysteine 231/cysteine 239, cysteine 235/cysteine 248, cysteine 251/cysteine 260, cysteine 264/cysteine 276, cysteine 282/cysteine 303, cysteine 307/cysteine 321, cysteine 324/cysteine 328, and cysteine 332/cysteine 353. Asparagine 244 carries N-linked (GlcNAc...) asparagine glycosylation. Asparagine 314 is a glycosylation site (N-linked (GlcNAc...) asparagine). Residues asparagine 417 and asparagine 438 are each glycosylated (N-linked (GlcNAc...) asparagine). An intrachain disulfide couples cysteine 455 to cysteine 488. Fibronectin type-III domains follow at residues 491–609, 610–708, 735–828, and 834–927; these read DVLH…TNAS, VPSI…TEAE, PERK…TMPA, and IPGP…VQAK. N-linked (GlcNAc...) asparagine glycosylation is found at asparagine 534, asparagine 607, asparagine 622, asparagine 640, asparagine 747, asparagine 756, asparagine 764, asparagine 900, and asparagine 913. Residues 741–935 lie on the Extracellular side of the membrane; it reads DVMQVANTTM…AKTGYENFIH (195 aa). Residues 936-959 traverse the membrane as a helical segment; sequence LIIALPVAVLLIVGGLVIMLYVFH. The Cytoplasmic portion of the chain corresponds to 960 to 1367; it reads RKRNNSRLGN…ALPLPQSSTC (408 aa). The short motif at 977–980 is the IRS1- and SHC1-binding element; it reads NPEY. Residue tyrosine 980 is modified to Phosphotyrosine. One can recognise a Protein kinase domain in the interval 999-1274; it reads ITMSRELGQG…SIKEEMEPGF (276 aa). Residues 1005–1013 and lysine 1033 each bind ATP; that span reads LGQGSFGMV. Aspartate 1135 acts as the Proton acceptor in catalysis. Residues tyrosine 1161, tyrosine 1165, and tyrosine 1166 each carry the phosphotyrosine; by autocatalysis modification. Residues lysine 1168 and lysine 1171 each participate in a glycyl lysine isopeptide (Lys-Gly) (interchain with G-Cter in ubiquitin) cross-link. Serine 1278 carries the post-translational modification Phosphoserine; by GSK3-beta. A Phosphoserine modification is found at serine 1282. The tract at residues 1288–1367 is disordered; that stretch reads PEPEELDLEP…ALPLPQSSTC (80 aa). Residues 1290 to 1299 show a composition bias toward acidic residues; sequence PEELDLEPEN. Residues 1300–1316 are compositionally biased toward low complexity; it reads MESVPLDPSASSSSLPL. A compositionally biased stretch (basic and acidic residues) spans 1317–1326; it reads PDRHSGHKAE.

It belongs to the protein kinase superfamily. Tyr protein kinase family. Insulin receptor subfamily. As to quaternary structure, tetramer of 2 alpha and 2 beta chains linked by disulfide bonds. The alpha chains contribute to the formation of the ligand-binding domain, while the beta chain carries the kinase domain. Interacts with PIK3R1 and with the PTB/PID domains of IRS1 and SHC1 in vitro when autophosphorylated on tyrosine residues. Forms a hybrid receptor with INSR, the hybrid is a tetramer consisting of 1 alpha chain and 1 beta chain of INSR and 1 alpha chain and 1 beta chain of IGF1R. Interacts with ARRB1 and ARRB2. Interacts with GRB10. Interacts with RACK1. Interacts with SOCS1, SOCS2 and SOCS3. Interacts with 14-3-3 proteins. Interacts with NMD2. Interacts with MAP3K5. Interacts with STAT3. Found in a ternary complex with IGF1 and ITGAV:ITGB3 or ITGA6:ITGB4. Interacts (nascent precursor form) with ZFAND2B. (Microbial infection) Interacts with human respiratory syncytial virus (HRSV) fusion glycoprotein F1/F2 heterodimer. In terms of processing, autophosphorylated on tyrosine residues in response to ligand binding. Autophosphorylation occurs in trans, i.e. one subunit of the dimeric receptor phosphorylates tyrosine residues on the other subunit. Autophosphorylation occurs in a sequential manner; Tyr-1165 is predominantly phosphorylated first, followed by phosphorylation of Tyr-1161 and Tyr-1166. While every single phosphorylation increases kinase activity, all three tyrosine residues in the kinase activation loop (Tyr-1165, Tyr-1161 and Tyr-1166) have to be phosphorylated for optimal activity. Can be autophosphorylated at additional tyrosine residues (in vitro). Autophosphorylated is followed by phosphorylation of juxtamembrane tyrosines and C-terminal serines. May also be phosphorylated at Tyr-1161 and Tyr-1166 by mTORC2. Phosphorylation of Tyr-980 is required for IRS1- and SHC1-binding. Phosphorylation of Ser-1278 by GSK-3beta restrains kinase activity and promotes cell surface expression, it requires a priming phosphorylation at Ser-1282. Dephosphorylated by PTPN1. Polyubiquitinated at Lys-1168 and Lys-1171 through both 'Lys-48' and 'Lys-29' linkages, promoting receptor endocytosis and subsequent degradation by the proteasome. Ubiquitination is facilitated by pre-existing phosphorylation. Post-translationally, sumoylated with SUMO1. In terms of processing, controlled by regulated intramembrane proteolysis (RIP). Undergoes metalloprotease-dependent constitutive ectodomain shedding to produce a membrane-anchored 52 kDa C-Terminal fragment which is further processed by presenilin gamma-secretase to yield an intracellular 50 kDa fragment. In terms of tissue distribution, found as a hybrid receptor with INSR in muscle, heart, kidney, adipose tissue, skeletal muscle, hepatoma, fibroblasts, spleen and placenta (at protein level). Expressed in a variety of tissues. Overexpressed in tumors, including melanomas, cancers of the colon, pancreas prostate and kidney.

Its subcellular location is the cell membrane. It carries out the reaction L-tyrosyl-[protein] + ATP = O-phospho-L-tyrosyl-[protein] + ADP + H(+). With respect to regulation, activated by autophosphorylation at Tyr-1165, Tyr-1161 and Tyr-1166 on the kinase activation loop; phosphorylation at all three tyrosine residues is required for optimal kinase activity. Inhibited by MSC1609119A-1, BMS-754807, PQIP, benzimidazole pyridinone, isoquinolinedione, bis-azaindole, 3-cyanoquinoline, 2,4-bis-arylamino-1,3-pyrimidine, pyrrolopyrimidine, pyrrole-5-carboxaldehyde, picropodophyllin (PPP), tyrphostin derivatives. While most inhibitors bind to the ATP binding pocket, MSC1609119A-1 functions as allosteric inhibitor and binds close to the DFG motif and the activation loop. Receptor tyrosine kinase which mediates actions of insulin-like growth factor 1 (IGF1). Binds IGF1 with high affinity and IGF2 and insulin (INS) with a lower affinity. The activated IGF1R is involved in cell growth and survival control. IGF1R is crucial for tumor transformation and survival of malignant cell. Ligand binding activates the receptor kinase, leading to receptor autophosphorylation, and tyrosines phosphorylation of multiple substrates, that function as signaling adapter proteins including, the insulin-receptor substrates (IRS1/2), Shc and 14-3-3 proteins. Phosphorylation of IRSs proteins lead to the activation of two main signaling pathways: the PI3K-AKT/PKB pathway and the Ras-MAPK pathway. The result of activating the MAPK pathway is increased cellular proliferation, whereas activating the PI3K pathway inhibits apoptosis and stimulates protein synthesis. Phosphorylated IRS1 can activate the 85 kDa regulatory subunit of PI3K (PIK3R1), leading to activation of several downstream substrates, including protein AKT/PKB. AKT phosphorylation, in turn, enhances protein synthesis through mTOR activation and triggers the antiapoptotic effects of IGFIR through phosphorylation and inactivation of BAD. In parallel to PI3K-driven signaling, recruitment of Grb2/SOS by phosphorylated IRS1 or Shc leads to recruitment of Ras and activation of the ras-MAPK pathway. In addition to these two main signaling pathways IGF1R signals also through the Janus kinase/signal transducer and activator of transcription pathway (JAK/STAT). Phosphorylation of JAK proteins can lead to phosphorylation/activation of signal transducers and activators of transcription (STAT) proteins. In particular activation of STAT3, may be essential for the transforming activity of IGF1R. The JAK/STAT pathway activates gene transcription and may be responsible for the transforming activity. JNK kinases can also be activated by the IGF1R. IGF1 exerts inhibiting activities on JNK activation via phosphorylation and inhibition of MAP3K5/ASK1, which is able to directly associate with the IGF1R. Its function is as follows. When present in a hybrid receptor with INSR, binds IGF1. PubMed:12138094 shows that hybrid receptors composed of IGF1R and INSR isoform Long are activated with a high affinity by IGF1, with low affinity by IGF2 and not significantly activated by insulin, and that hybrid receptors composed of IGF1R and INSR isoform Short are activated by IGF1, IGF2 and insulin. In contrast, PubMed:16831875 shows that hybrid receptors composed of IGF1R and INSR isoform Long and hybrid receptors composed of IGF1R and INSR isoform Short have similar binding characteristics, both bind IGF1 and have a low affinity for insulin. This chain is Insulin-like growth factor 1 receptor (IGF1R), found in Homo sapiens (Human).